The primary structure comprises 160 residues: MSEKTYPMTLAEKEQLEQELEELKLVRRPEVIERIKIARSYGDLSENSEYEAAKDEQAFVEGQISSIETKIRYAEIVDSDAVAKNEVAIGKTVIVREVGTNDEDTYSIVGAAGADVFAGKISNESPIAQALIGKKTGDKVMIESPAGSYQVEIVKVKKTK.

Residues 2–30 (SEKTYPMTLAEKEQLEQELEELKLVRRPE) are a coiled coil.

Belongs to the GreA/GreB family.

Necessary for efficient RNA polymerase transcription elongation past template-encoded arresting sites. The arresting sites in DNA have the property of trapping a certain fraction of elongating RNA polymerases that pass through, resulting in locked ternary complexes. Cleavage of the nascent transcript by cleavage factors such as GreA or GreB allows the resumption of elongation from the new 3'terminus. GreA releases sequences of 2 to 3 nucleotides. This Streptococcus mutans serotype c (strain ATCC 700610 / UA159) protein is Transcription elongation factor GreA.